The primary structure comprises 189 residues: Interferon alpha-C (189 aa).

The signal sequence occupies residues 1 to 23; sequence MAPAWSFRLALLLLSCNAICSLG. 2 disulfides stabilise this stretch: Cys-24-Cys-122 and Cys-52-Cys-162.

Belongs to the alpha/beta interferon family.

The protein resides in the secreted. Functionally, produced by macrophages, IFN-alpha have antiviral activities. Interferon stimulates the production of two enzymes: a protein kinase and an oligoadenylate synthetase. The sequence is that of Interferon alpha-C (IFNAC) from Bos taurus (Bovine).